Here is a 200-residue protein sequence, read N- to C-terminus: Guanylyl cyclase-activating protein 2 (200 aa).

Gly-2 carries N-myristoyl glycine lipidation. 4 consecutive EF-hand domains span residues 14-31 (GEID…FVME), 53-88 (EASQ…VLRG), 89-124 (TLEH…IYQL), and 141-176 (TPEE…DKWV). Ca(2+)-binding residues include Asp-66, Asn-68, Asp-70, Thr-72, Glu-77, Asp-102, Asp-104, Asn-106, Cys-108, Glu-113, Asp-154, Asn-156, Asp-158, Gln-160, and Glu-165.

Post-translationally, the N-terminus is blocked. In terms of tissue distribution, in the retina, it is expressed in cone and rod photoreceptor cells.

The protein resides in the cell membrane. It is found in the photoreceptor inner segment. Its subcellular location is the cell projection. The protein localises to the cilium. It localises to the photoreceptor outer segment. Functionally, stimulates two retinal guanylyl cyclases (GCs) GUCY2D and GUCY2F when free calcium ions concentration is low, and inhibits GUCY2D and GUCY2F when free calcium ions concentration is elevated. This Ca(2+)-sensitive regulation of GCs is a key event in recovery of the dark state of rod photoreceptors following light exposure. May be involved in cone photoreceptor response and recovery of response in bright light. This Homo sapiens (Human) protein is Guanylyl cyclase-activating protein 2 (GUCA1B).